We begin with the raw amino-acid sequence, 165 residues long: MSDTAVADTRRLNSKPQDLTDAYGPPSNFLEIDIFNPQTVGVGRARFTTYEVRMRTNLPIFKLKESCVRRRYSDFEWLKNELERDSKIVVPPLPGKALKRHPFRGDEGIFEESFIEERRQGLEQFINKIAGHPLAQNERCLHMFLQEEAIDRNYVAGKVLGEKDC.

The tract at residues 1–20 (MSDTAVADTRRLNSKPQDLT) is disordered. Position 2 is an N-acetylserine (Ser2). Phosphotyrosine is present on Tyr23. The 124-residue stretch at 28-151 (NFLEIDIFNP…HMFLQEEAID (124 aa)) folds into the PX domain. The a 1,2-diacyl-sn-glycero-3-phospho-(1D-myo-inositol-3-phosphate) site is built by Arg71, Ser73, Lys96, and Arg118. Residue Ser73 is modified to Phosphoserine.

Belongs to the sorting nexin family.

The protein localises to the membrane. May be involved in several stages of intracellular trafficking. The chain is Sorting nexin-12 (Snx12) from Mus musculus (Mouse).